A 270-amino-acid polypeptide reads, in one-letter code: UPF0354 protein BA_4944/GBAA_4944/BAS4588 (270 aa).

Belongs to the UPF0354 family.

The chain is UPF0354 protein BA_4944/GBAA_4944/BAS4588 from Bacillus anthracis.